Here is a 100-residue protein sequence, read N- to C-terminus: Succinate dehydrogenase subunit 7B, mitochondrial (100 aa).

The tract at residues 1–25 is disordered; that stretch reads MAFLLNNASISSHLRSSSSQKTGDA. A mitochondrion-targeting transit peptide spans 1 to 32; the sequence is MAFLLNNASISSHLRSSSSQKTGDALSISRRG. The segment covering 9 to 19 has biased composition (low complexity); sequence SISSHLRSSSS.

As to quaternary structure, component of complex II composed of eight subunits in plants: four classical SDH subunits SDH1, SDH2, SDH3 and SDH4 (a flavoprotein (FP), an iron-sulfur protein (IP), and a cytochrome b composed of a large and a small subunit.), as well as four subunits unknown in mitochondria from bacteria and heterotrophic eukaryotes.

It is found in the mitochondrion inner membrane. The protein operates within carbohydrate metabolism; tricarboxylic acid cycle. This Arabidopsis thaliana (Mouse-ear cress) protein is Succinate dehydrogenase subunit 7B, mitochondrial.